The following is a 396-amino-acid chain: Phosphoglycerate kinase (396 aa).

Residues 21–23 (DFN), Arg36, 59–62 (HLGK), Arg119, and Arg156 contribute to the substrate site. Residues Lys206, Gly294, Glu325, and 352–355 (GGDS) each bind ATP.

This sequence belongs to the phosphoglycerate kinase family. As to quaternary structure, monomer.

The protein resides in the cytoplasm. It catalyses the reaction (2R)-3-phosphoglycerate + ATP = (2R)-3-phospho-glyceroyl phosphate + ADP. It functions in the pathway carbohydrate degradation; glycolysis; pyruvate from D-glyceraldehyde 3-phosphate: step 2/5. The sequence is that of Phosphoglycerate kinase from Listeria monocytogenes serotype 4b (strain CLIP80459).